Reading from the N-terminus, the 444-residue chain is MAKKYFGTDGVRGEVGQFPITPDFVLKLGYAAGQVLVQHDTDQKPTVLIGKDTRISGYMLEAALVAGFTAAGVNVVQTGPLPTPGVAYLTRALRLSAGVMISASHNAYSDNGIKFFAEGGVKLSDEIELEIEAKIDEEMKTQPSARLGRARRISGADDRYIEFCKSTFPSHSDLRGLKLVIDTANGAGYGVAPKVFHELGAQVVSIGDEPNGYNINEKCGATYTKTLQAAVLQHEADYGIALDGDGDRLMMVDKNGKVYDGDSLIYVIAKARAREGINIGGVVGTVMTNMAMEIALKEQGVDFCRAKVGDRYVLEQLNQRSWLIGGEASGHILCMDKHNTGDGIISALQVLAALQTLNQDLATVCADWQPYPQTMINVRIQKGQKWQEASKDVLAEVEKELEGKGRVVLRASGTEPVVRVMVEARQADWARDGAERIASAIGSL.

The active-site Phosphoserine intermediate is serine 104. Serine 104, aspartate 243, aspartate 245, and aspartate 247 together coordinate Mg(2+). Serine 104 is subject to Phosphoserine.

Belongs to the phosphohexose mutase family. Mg(2+) serves as cofactor. Post-translationally, activated by phosphorylation.

It carries out the reaction alpha-D-glucosamine 1-phosphate = D-glucosamine 6-phosphate. Its function is as follows. Catalyzes the conversion of glucosamine-6-phosphate to glucosamine-1-phosphate. This is Phosphoglucosamine mutase from Neisseria meningitidis serogroup A / serotype 4A (strain DSM 15465 / Z2491).